Here is a 239-residue protein sequence, read N- to C-terminus: Probable GTP-binding protein EngB (239 aa).

The EngB-type G domain maps to Gln-23–Leu-219. Residues Gly-31 to Ser-38, Gly-58 to His-62, Asp-92 to Gly-95, Thr-159 to Asp-162, and Phe-193 to Ala-200 contribute to the GTP site. Mg(2+) is bound by residues Ser-38 and Thr-60.

It belongs to the TRAFAC class TrmE-Era-EngA-EngB-Septin-like GTPase superfamily. EngB GTPase family. Mg(2+) serves as cofactor.

Its function is as follows. Necessary for normal cell division and for the maintenance of normal septation. The chain is Probable GTP-binding protein EngB from Herminiimonas arsenicoxydans.